A 339-amino-acid polypeptide reads, in one-letter code: DNA-directed RNA polymerase subunit alpha (339 aa).

Residues 1–233 are alpha N-terminal domain (alpha-NTD); that stretch reads MVREEVAGST…DLFLPFLHAE (233 aa). The segment at 264-339 is alpha C-terminal domain (alpha-CTD); that stretch reads KKGIPLNCIF…IDLLKNKLSF (76 aa).

It belongs to the RNA polymerase alpha chain family. In terms of assembly, in plastids the minimal PEP RNA polymerase catalytic core is composed of four subunits: alpha, beta, beta', and beta''. When a (nuclear-encoded) sigma factor is associated with the core the holoenzyme is formed, which can initiate transcription.

Its subcellular location is the plastid. It is found in the chloroplast. It catalyses the reaction RNA(n) + a ribonucleoside 5'-triphosphate = RNA(n+1) + diphosphate. DNA-dependent RNA polymerase catalyzes the transcription of DNA into RNA using the four ribonucleoside triphosphates as substrates. This chain is DNA-directed RNA polymerase subunit alpha, found in Australopyrum velutinum (Mountain wheat-grass).